A 357-amino-acid chain; its full sequence is UDP-3-O-acylglucosamine N-acyltransferase (357 aa).

His251 (proton acceptor) is an active-site residue.

The protein belongs to the transferase hexapeptide repeat family. LpxD subfamily. As to quaternary structure, homotrimer.

The enzyme catalyses a UDP-3-O-[(3R)-3-hydroxyacyl]-alpha-D-glucosamine + a (3R)-hydroxyacyl-[ACP] = a UDP-2-N,3-O-bis[(3R)-3-hydroxyacyl]-alpha-D-glucosamine + holo-[ACP] + H(+). The protein operates within bacterial outer membrane biogenesis; LPS lipid A biosynthesis. Functionally, catalyzes the N-acylation of UDP-3-O-acylglucosamine using 3-hydroxyacyl-ACP as the acyl donor. Is involved in the biosynthesis of lipid A, a phosphorylated glycolipid that anchors the lipopolysaccharide to the outer membrane of the cell. In Ralstonia pickettii (strain 12J), this protein is UDP-3-O-acylglucosamine N-acyltransferase.